The following is a 142-amino-acid chain: Augurin-A (142 aa).

The signal sequence occupies residues 1–28 (MLSEKFHLRLLTLLTLLTALSLTDVASE). 2 propeptides span residues 29 to 66 (SKLE…LKRP) and 127 to 142 (GAAS…YDYY).

The protein belongs to the augurin family.

It localises to the secreted. The protein resides in the cytoplasm. It is found in the apical cell membrane. Functionally, probable hormone. Required for the proper formation of the central nervous system by attenuating cell proliferation during development. The protein is Augurin-A of Danio rerio (Zebrafish).